The chain runs to 185 residues: Isopentenyl-diphosphate Delta-isomerase (185 aa).

Mn(2+) is bound by residues histidine 27 and histidine 34. One can recognise a Nudix hydrolase domain in the interval 32 to 168; it reads PLHLAFSCHL…PWAFSPWLTL (137 aa). The active site involves cysteine 69. A Mg(2+)-binding site is contributed by cysteine 69. Histidine 71 is a binding site for Mn(2+). Glutamate 89 is a Mg(2+) binding site. Mn(2+) is bound by residues glutamate 118 and glutamate 120. Residue glutamate 120 is part of the active site.

This sequence belongs to the IPP isomerase type 1 family. It depends on Mg(2+) as a cofactor. Mn(2+) serves as cofactor.

Its subcellular location is the cytoplasm. The enzyme catalyses isopentenyl diphosphate = dimethylallyl diphosphate. Its pathway is isoprenoid biosynthesis; dimethylallyl diphosphate biosynthesis; dimethylallyl diphosphate from isopentenyl diphosphate: step 1/1. In terms of biological role, catalyzes the 1,3-allylic rearrangement of the homoallylic substrate isopentenyl (IPP) to its highly electrophilic allylic isomer, dimethylallyl diphosphate (DMAPP). This is Isopentenyl-diphosphate Delta-isomerase from Leifsonia xyli subsp. xyli (strain CTCB07).